We begin with the raw amino-acid sequence, 420 residues long: Transcriptional adapter 2-beta (420 aa).

The ZZ-type zinc finger occupies 4 to 59 (LGKKYCVYCLAEVSPLRFRCTECQDIELCPECFSAGAEIGHHRRYHGYQLVDGGRF). Residues Cys9, Cys12, Cys23, Cys26, Cys32, Cys35, His45, and His49 each coordinate Zn(2+). The SANT domain maps to 65–118 (EAEGGWTSREEQLLLDAIEQFGFGNWEDMAAHVGASRTPQEVMEHYVSMYIHGN). The tract at residues 305-335 (SAEYEAARHKREKRKENKNLAGSKRGKEDGK) is disordered.

Interacts with GCN5L2, SMARCA4, SMARCE1 and PAX5. Component of the TFTC-HAT complex.

It localises to the nucleus. Its function is as follows. Coactivates PAX5-dependent transcription together with either SMARCA4 or GCN5L2. The polypeptide is Transcriptional adapter 2-beta (TADA2B) (Homo sapiens (Human)).